A 198-amino-acid chain; its full sequence is MIEFVYPHTQLVAGVDEVGRGPLVGAVVTAAVILDPARPIAGLNDSKKLSEKRRLALCEEIKEKALSWSLGRAEPHEIDELNILHATMLAMQRAVAGLHIAPEYVLIDGNRCPKLPMPAMVVVKGDSRVPEISAASILAKVTRDAEMAALDIVFPQYGFAQHKGYPTAFHLEKLAEHGATEHHRRSFGPVKRALGLAS.

Positions 10-198 (QLVAGVDEVG…PVKRALGLAS (189 aa)) constitute an RNase H type-2 domain. Aspartate 16, glutamate 17, and aspartate 108 together coordinate a divalent metal cation.

It belongs to the RNase HII family. Requires Mn(2+) as cofactor. Mg(2+) serves as cofactor.

It is found in the cytoplasm. It carries out the reaction Endonucleolytic cleavage to 5'-phosphomonoester.. Endonuclease that specifically degrades the RNA of RNA-DNA hybrids. This Shigella boydii serotype 4 (strain Sb227) protein is Ribonuclease HII.